The chain runs to 354 residues: Opsin-1, short-wave-sensitive 2 (354 aa).

Over 1 to 43 the chain is Extracellular; it reads MKQQQQTPELFEDFHMPITLDVSNISAYSPFLVPQDHLGHSGV. N-linked (GlcNAc...) asparagine glycosylation is present at N24. The helical transmembrane segment at 44–68 threads the bilayer; the sequence is FMGMSAFMLFLFIAGTAINVLTIVC. Residues 69-80 lie on the Cytoplasmic side of the membrane; sequence TIQYKKLRSHLN. Residues 81 to 106 traverse the membrane as a helical segment; it reads YILVNLAISNLWVSVFGSSVAFYAFY. Residues 107-120 are Extracellular-facing; sequence KKYFVFGPIGCKIE. C117 and C194 form a disulfide bridge. The chain crosses the membrane as a helical span at residues 121–140; that stretch reads GFTSTIGGMVSLWSLAVVAL. The Cytoplasmic segment spans residues 141–159; that stretch reads ERWLVICKPLGNFTFKTPH. A helical membrane pass occupies residues 160–183; the sequence is AIAGCILPWCMALAAGLPPLLGWS. Residues 184–209 are Extracellular-facing; sequence RYIPEGLQCSCGPDWYTTNNKFNNES. N207 is a glycosylation site (N-linked (GlcNAc...) asparagine). Residues 210 to 237 form a helical membrane-spanning segment; sequence YVMFLFCFCFAVPFSTIVFCYGQLLITL. The Cytoplasmic portion of the chain corresponds to 238 to 259; it reads KLAAKAQADSASTQKAEREVTK. A helical transmembrane segment spans residues 260-283; that stretch reads MVVVMVFGFLICWGPYAIFAIWVV. The Extracellular portion of the chain corresponds to 284-291; that stretch reads SNRGAPFD. The chain crosses the membrane as a helical span at residues 292-316; the sequence is LRLATIPSCLCKASTVYNPVIYVLM. Position 303 is an N6-(retinylidene)lysine (K303). The Cytoplasmic segment spans residues 317–354; it reads NKQFRSCMMKMVFNKNIEEDEASSSSQVTQVSSVAPEK.

Belongs to the G-protein coupled receptor 1 family. Opsin subfamily. Post-translationally, phosphorylated on some or all of the serine and threonine residues present in the C-terminal region. As to expression, retinal long single cone outer segments.

It localises to the membrane. Functionally, visual pigments are the light-absorbing molecules that mediate vision. They consist of an apoprotein, opsin, covalently linked to cis-retinal. The protein is Opsin-1, short-wave-sensitive 2 (opn1sw2) of Danio rerio (Zebrafish).